The following is a 402-amino-acid chain: uncharacterized protein (402 aa).

An N-terminal signal peptide occupies residues 1 to 44 (MLEKNLLPEILLAIHMPLNKGLTRVKAIVIIIVVIIAVIAGVVG). Positions 53–79 (NSVTTSSSSTTTSSSLSSTSISSSTTN) are disordered.

It belongs to the bacterial solute-binding protein 1 family. WtpA subfamily.

This is an uncharacterized protein from Saccharolobus solfataricus (strain ATCC 35092 / DSM 1617 / JCM 11322 / P2) (Sulfolobus solfataricus).